Reading from the N-terminus, the 222-residue chain is MNEVKESLRSIEQKYKLFQQQQLTFTAALEHCRENAHDKIRPISSIGQVQSYMEHYCNSSTDRRVLLMFLDICSELNKLCQHFEAVHSGTPVTNNLLEKCKTLVSQSNDLSSLRAKYPHDVVNHLSCDEARNHYGGVVSLIPLILDLMKEWIAHSEKLPRKVLQHVSEPQAHQESTRGAARPAQAIGTQPRATKHKCRQLTKASLKPRGCSKPPWRPPGGKL.

Residues 164–222 (QHVSEPQAHQESTRGAARPAQAIGTQPRATKHKCRQLTKASLKPRGCSKPPWRPPGGKL) form a disordered region.

In terms of assembly, microtubule inner protein component of sperm flagellar doublet microtubules. Interacts with CABP1 and CALR. Interacts with INCA1. Interacts with microtubules.

The protein localises to the cytoplasm. Its subcellular location is the cytoplasmic vesicle. It localises to the secretory vesicle. The protein resides in the acrosome. It is found in the cytoskeleton. The protein localises to the cilium basal body. Its subcellular location is the flagellum axoneme. It localises to the cilium axoneme. The protein resides in the nucleus. Its function is as follows. Microtubule inner protein (MIP) part of the dynein-decorated doublet microtubules (DMTs) of multiciliated respiratory cells and the distal singlet microtubules of monoflagellated spermatozoa. Forms an extensive interaction network cross-linking the lumen of axonemal doublet microtubules. The sequence is that of Sperm acrosome-associated protein 9 from Homo sapiens (Human).